A 206-amino-acid chain; its full sequence is Small ribosomal subunit protein uS4 (206 aa).

In terms of domain architecture, S4 RNA-binding spans 98-158 (RRLDNVVFRL…EKSRSMELIK (61 aa)).

Belongs to the universal ribosomal protein uS4 family. In terms of assembly, part of the 30S ribosomal subunit. Contacts protein S5. The interaction surface between S4 and S5 is involved in control of translational fidelity.

In terms of biological role, one of the primary rRNA binding proteins, it binds directly to 16S rRNA where it nucleates assembly of the body of the 30S subunit. With S5 and S12 plays an important role in translational accuracy. This Thermoanaerobacter pseudethanolicus (strain ATCC 33223 / 39E) (Clostridium thermohydrosulfuricum) protein is Small ribosomal subunit protein uS4.